The sequence spans 685 residues: Galactocerebrosidase (685 aa).

The signal sequence occupies residues 1–42 (MAEWLLSASRQRRVKAMTAAAGSAGRAAVPFLLCALLAPGGA). T109 provides a ligand contact to substrate. An N-linked (GlcNAc...) asparagine glycan is attached at N143. Substrate-binding residues include W151 and N197. Residue E198 is the Proton donor/acceptor of the active site. E274 acts as the Nucleophile in catalysis. C287 and C394 form a disulfide bridge. N379 carries N-linked (GlcNAc...) asparagine glycosylation. Residue R396 participates in substrate binding. N403, N451, N556, N559, and N602 each carry an N-linked (GlcNAc...) asparagine glycan.

This sequence belongs to the glycosyl hydrolase 59 family.

It localises to the lysosome. The enzyme catalyses a beta-D-galactosyl-(1&lt;-&gt;1')-N-acylsphing-4-enine + H2O = an N-acylsphing-4-enine + D-galactose. It catalyses the reaction beta-D-galactosyl-(1&lt;-&gt;1)-sphing-4-enine + H2O = sphing-4-enine + D-galactose. The catalysed reaction is a D-galactosylceramide + H2O = an N-acyl-sphingoid base + D-galactose. In terms of biological role, hydrolyzes the galactose ester bonds of glycolipids such as galactosylceramide and galactosylsphingosine. Enzyme with very low activity responsible for the lysosomal catabolism of galactosylceramide, a major lipid in myelin, kidney and epithelial cells of small intestine and colon. The sequence is that of Galactocerebrosidase from Macaca mulatta (Rhesus macaque).